The chain runs to 213 residues: Kynurenine formamidase (213 aa).

Residue Trp-20 coordinates substrate. Zn(2+) is bound by residues His-50, His-54, and Asp-56. Residue His-60 is the Proton donor/acceptor of the active site. Residues His-161 and Glu-173 each coordinate Zn(2+).

This sequence belongs to the Cyclase 1 superfamily. KynB family. As to quaternary structure, homodimer. Zn(2+) serves as cofactor.

It catalyses the reaction N-formyl-L-kynurenine + H2O = L-kynurenine + formate + H(+). It functions in the pathway amino-acid degradation; L-tryptophan degradation via kynurenine pathway; L-kynurenine from L-tryptophan: step 2/2. Catalyzes the hydrolysis of N-formyl-L-kynurenine to L-kynurenine, the second step in the kynurenine pathway of tryptophan degradation. This Pseudomonas aeruginosa (strain UCBPP-PA14) protein is Kynurenine formamidase.